We begin with the raw amino-acid sequence, 388 residues long: Succinate--CoA ligase [ADP-forming] subunit beta (388 aa).

One can recognise an ATP-grasp domain in the interval 9-244 (KQLFAEYGLP…PSQDDAREAH (236 aa)). ATP is bound by residues Lys-46, 53–55 (GRG), Glu-99, Thr-102, and Glu-107. 2 residues coordinate Mg(2+): Asn-199 and Asp-213. Residues Asn-264 and 321 to 323 (GIV) each bind substrate.

The protein belongs to the succinate/malate CoA ligase beta subunit family. In terms of assembly, heterotetramer of two alpha and two beta subunits. The cofactor is Mg(2+).

It carries out the reaction succinate + ATP + CoA = succinyl-CoA + ADP + phosphate. It catalyses the reaction GTP + succinate + CoA = succinyl-CoA + GDP + phosphate. It participates in carbohydrate metabolism; tricarboxylic acid cycle; succinate from succinyl-CoA (ligase route): step 1/1. Its function is as follows. Succinyl-CoA synthetase functions in the citric acid cycle (TCA), coupling the hydrolysis of succinyl-CoA to the synthesis of either ATP or GTP and thus represents the only step of substrate-level phosphorylation in the TCA. The beta subunit provides nucleotide specificity of the enzyme and binds the substrate succinate, while the binding sites for coenzyme A and phosphate are found in the alpha subunit. This chain is Succinate--CoA ligase [ADP-forming] subunit beta, found in Pseudomonas aeruginosa (strain UCBPP-PA14).